Reading from the N-terminus, the 309-residue chain is UDP-3-O-acyl-N-acetylglucosamine deacetylase (309 aa).

Zn(2+) is bound by residues histidine 78, histidine 235, and aspartate 239. The Proton donor role is filled by histidine 262.

The protein belongs to the LpxC family. It depends on Zn(2+) as a cofactor.

The enzyme catalyses a UDP-3-O-[(3R)-3-hydroxyacyl]-N-acetyl-alpha-D-glucosamine + H2O = a UDP-3-O-[(3R)-3-hydroxyacyl]-alpha-D-glucosamine + acetate. Its pathway is glycolipid biosynthesis; lipid IV(A) biosynthesis; lipid IV(A) from (3R)-3-hydroxytetradecanoyl-[acyl-carrier-protein] and UDP-N-acetyl-alpha-D-glucosamine: step 2/6. In terms of biological role, catalyzes the hydrolysis of UDP-3-O-myristoyl-N-acetylglucosamine to form UDP-3-O-myristoylglucosamine and acetate, the committed step in lipid A biosynthesis. This is UDP-3-O-acyl-N-acetylglucosamine deacetylase from Syntrophotalea carbinolica (strain DSM 2380 / NBRC 103641 / GraBd1) (Pelobacter carbinolicus).